Here is a 445-residue protein sequence, read N- to C-terminus: Trigger factor (445 aa).

Residues 162–247 form the PPIase FKBP-type domain; that stretch reads GDQVTIDAIG…IKAVHTAEPT (86 aa).

The protein belongs to the FKBP-type PPIase family. Tig subfamily.

The protein localises to the cytoplasm. It catalyses the reaction [protein]-peptidylproline (omega=180) = [protein]-peptidylproline (omega=0). Its function is as follows. Involved in protein export. Acts as a chaperone by maintaining the newly synthesized protein in an open conformation. Functions as a peptidyl-prolyl cis-trans isomerase. This Rickettsia africae (strain ESF-5) protein is Trigger factor.